Consider the following 355-residue polypeptide: MNGTEGINFYVPLSNKTGLVRSPFEYPQYYLADPWKFKVLSFYMFFLIAAGMPLNGLTLFVTFQHKKLRQPLNYILVNLAAANLVTVCCGFTVTFYASWYAYFVFGPIGCAIEGFFATIGGQVALWSLVVLAIERYIVICKPMGNFRFSATHAIMGIAFTWFMALACAGPPLFGWSRFIPEGMQCSCGPDYYTLNPDFHNESYVIYMFIVHFTVPMVVIFFSYGRLVCKVREAAAQQQESATTQKAEKEVTRMVILMVLGFLLAWTPYAATAIWIFTNRGAAFSVTFMTIPAFFSKSSSIYNPIIYVLLNKQFRNCMVTTICCGKNPFGDEDVSSSVSQSKTEVSSVSSSQVAPA.

Residues 1–36 lie on the Extracellular side of the membrane; sequence MNGTEGINFYVPLSNKTGLVRSPFEYPQYYLADPWK. N2 and N15 each carry an N-linked (GlcNAc...) asparagine glycan. The helical transmembrane segment at 37–61 threads the bilayer; that stretch reads FKVLSFYMFFLIAAGMPLNGLTLFV. Topologically, residues 62-73 are cytoplasmic; sequence TFQHKKLRQPLN. The chain crosses the membrane as a helical span at residues 74–98; it reads YILVNLAAANLVTVCCGFTVTFYAS. Residues 99-113 lie on the Extracellular side of the membrane; it reads WYAYFVFGPIGCAIE. Cysteines 110 and 187 form a disulfide. A helical transmembrane segment spans residues 114–133; the sequence is GFFATIGGQVALWSLVVLAI. The Cytoplasmic portion of the chain corresponds to 134–152; that stretch reads ERYIVICKPMGNFRFSATH. A helical transmembrane segment spans residues 153-176; that stretch reads AIMGIAFTWFMALACAGPPLFGWS. The Extracellular segment spans residues 177–202; that stretch reads RFIPEGMQCSCGPDYYTLNPDFHNES. N200 is a glycosylation site (N-linked (GlcNAc...) asparagine). A helical transmembrane segment spans residues 203 to 230; it reads YVIYMFIVHFTVPMVVIFFSYGRLVCKV. Over 231-252 the chain is Cytoplasmic; sequence REAAAQQQESATTQKAEKEVTR. Residues 253–276 form a helical membrane-spanning segment; it reads MVILMVLGFLLAWTPYAATAIWIF. The Extracellular segment spans residues 277 to 284; that stretch reads TNRGAAFS. A helical membrane pass occupies residues 285-309; sequence VTFMTIPAFFSKSSSIYNPIIYVLL. An N6-(retinylidene)lysine modification is found at K296. Residues 310–355 are Cytoplasmic-facing; the sequence is NKQFRNCMVTTICCGKNPFGDEDVSSSVSQSKTEVSSVSSSQVAPA. Positions 333 to 355 are disordered; sequence VSSSVSQSKTEVSSVSSSQVAPA. Residues 334–355 show a composition bias toward low complexity; sequence SSSVSQSKTEVSSVSSSQVAPA.

The protein belongs to the G-protein coupled receptor 1 family. Opsin subfamily. In terms of processing, phosphorylated on some or all of the serine and threonine residues present in the C-terminal region. In this lizard the color pigments are found in the rod-shaped photoreceptor cells which have been derived from ancestral cone-like photoreceptors.

Its subcellular location is the membrane. Visual pigments are the light-absorbing molecules that mediate vision. They consist of an apoprotein, opsin, covalently linked to cis-retinal. The protein is Blue-sensitive opsin P467 of Gekko gecko (Tokay gecko).